A 461-amino-acid chain; its full sequence is Cysteine--tRNA ligase (461 aa).

Residue Cys-28 participates in Zn(2+) binding. Positions 30–40 (VTIYDLCHIGH) match the 'HIGH' region motif. 3 residues coordinate Zn(2+): Cys-209, His-234, and Glu-238. The 'KMSKS' region signature appears at 266-270 (KMSKS). Residue Lys-269 participates in ATP binding.

This sequence belongs to the class-I aminoacyl-tRNA synthetase family. As to quaternary structure, monomer. The cofactor is Zn(2+).

The protein resides in the cytoplasm. The enzyme catalyses tRNA(Cys) + L-cysteine + ATP = L-cysteinyl-tRNA(Cys) + AMP + diphosphate. The protein is Cysteine--tRNA ligase of Vibrio atlanticus (strain LGP32) (Vibrio splendidus (strain Mel32)).